A 65-amino-acid polypeptide reads, in one-letter code: Large ribosomal subunit protein uL29 (65 aa).

The protein belongs to the universal ribosomal protein uL29 family.

This is Large ribosomal subunit protein uL29 from Natranaerobius thermophilus (strain ATCC BAA-1301 / DSM 18059 / JW/NM-WN-LF).